The sequence spans 398 residues: Tryptophan synthase beta chain (398 aa).

An N6-(pyridoxal phosphate)lysine modification is found at Lys-88.

It belongs to the TrpB family. In terms of assembly, tetramer of two alpha and two beta chains. Requires pyridoxal 5'-phosphate as cofactor.

The catalysed reaction is (1S,2R)-1-C-(indol-3-yl)glycerol 3-phosphate + L-serine = D-glyceraldehyde 3-phosphate + L-tryptophan + H2O. The protein operates within amino-acid biosynthesis; L-tryptophan biosynthesis; L-tryptophan from chorismate: step 5/5. In terms of biological role, the beta subunit is responsible for the synthesis of L-tryptophan from indole and L-serine. In Haemophilus influenzae (strain PittGG), this protein is Tryptophan synthase beta chain.